The primary structure comprises 2779 residues: Protein lava lamp (2779 aa).

Disordered regions lie at residues Leu-31–Lys-62, Ala-79–Ser-98, and Lys-110–Leu-135. Positions Gly-33–Gly-51 are enriched in polar residues. Phosphoserine is present on residues Ser-34 and Ser-35. The stretch at Thr-52–Asp-85 forms a coiled coil. Basic and acidic residues predominate over residues Ala-79–Ser-91. Phosphoserine occurs at positions 95, 98, 122, and 133. Positions Glu-141–Ile-175 form a coiled coil. Phosphoserine occurs at positions 186, 352, and 354. Coiled-coil stretches lie at residues Glu-220 to Ile-607 and Gly-659 to Ile-716. Over residues Glu-337–Ser-352 the composition is skewed to basic and acidic residues. Disordered stretches follow at residues Glu-337 to Val-366, Arg-622 to Leu-662, Arg-711 to Ser-730, and Gln-1716 to Ala-1753. 2 stretches are compositionally biased toward low complexity: residues Ser-717–Ser-730 and Gln-1716–Gln-1740. Coiled coils occupy residues Leu-751–His-1733, Thr-1785–Gln-1863, and Asn-1941–Asn-2433. Disordered regions lie at residues Glu-2348–Val-2367, Glu-2484–Ser-2507, Asn-2552–Glu-2578, and Thr-2633–Asn-2665. Over residues Gln-2488–Gln-2502 the composition is skewed to low complexity. The stretch at Glu-2504–Gln-2544 forms a coiled coil. Residues Asp-2600 to Glu-2641 adopt a coiled-coil conformation. Residues Ser-2643–Asn-2665 show a composition bias toward low complexity.

Interacts with CLIP-190 and spectrin separately.

The protein resides in the golgi apparatus. It is found in the cytoplasmic vesicle. Its subcellular location is the autophagosome. Its function is as follows. Lva and spectrin may form a Golgi-based scaffold that mediates interaction of Golgi bodies with microtubules and facilitates Golgi-derived membrane secretion required for the formation of furrows during cellularization. Under starvation conditions recruited by ema to developing autophagsosomes where it may function in autophagosome growth. In Drosophila melanogaster (Fruit fly), this protein is Protein lava lamp (lva).